The primary structure comprises 137 residues: Small ribosomal subunit protein uS12 (137 aa).

The interval 1–55 is disordered; it reads MPTINQLVRKPRKSKVEKSDSPALNKGYNSFKKTQTNVNSPQKRGVCTRVGTMTP. Positions 27-42 are enriched in polar residues; it reads GYNSFKKTQTNVNSPQ. Asp-102 carries the 3-methylthioaspartic acid modification.

Belongs to the universal ribosomal protein uS12 family. As to quaternary structure, part of the 30S ribosomal subunit. Contacts proteins S8 and S17. May interact with IF1 in the 30S initiation complex.

Its function is as follows. With S4 and S5 plays an important role in translational accuracy. Functionally, interacts with and stabilizes bases of the 16S rRNA that are involved in tRNA selection in the A site and with the mRNA backbone. Located at the interface of the 30S and 50S subunits, it traverses the body of the 30S subunit contacting proteins on the other side and probably holding the rRNA structure together. The combined cluster of proteins S8, S12 and S17 appears to hold together the shoulder and platform of the 30S subunit. This Enterococcus faecalis (strain ATCC 700802 / V583) protein is Small ribosomal subunit protein uS12.